Here is a 194-residue protein sequence, read N- to C-terminus: Imidazoleglycerol-phosphate dehydratase (194 aa).

The protein belongs to the imidazoleglycerol-phosphate dehydratase family.

Its subcellular location is the cytoplasm. The enzyme catalyses D-erythro-1-(imidazol-4-yl)glycerol 3-phosphate = 3-(imidazol-4-yl)-2-oxopropyl phosphate + H2O. It participates in amino-acid biosynthesis; L-histidine biosynthesis; L-histidine from 5-phospho-alpha-D-ribose 1-diphosphate: step 6/9. The polypeptide is Imidazoleglycerol-phosphate dehydratase (Streptococcus gordonii (strain Challis / ATCC 35105 / BCRC 15272 / CH1 / DL1 / V288)).